The chain runs to 66 residues: UPF0370 protein YpfN (66 aa).

A helical membrane pass occupies residues 4–24; sequence LAKYWWILVLVFLVGVLLNVI. Residues 39-66 form a disordered region; it reads KPELPPHRDFNDKWDDEDGWPKKDQPKK. Residues 42–66 show a composition bias toward basic and acidic residues; sequence LPPHRDFNDKWDDEDGWPKKDQPKK.

Belongs to the UPF0370 family.

It is found in the cell membrane. The sequence is that of UPF0370 protein YpfN from Salmonella paratyphi B (strain ATCC BAA-1250 / SPB7).